Consider the following 361-residue polypeptide: Histidinol-phosphate aminotransferase (361 aa).

N6-(pyridoxal phosphate)lysine is present on K224.

The protein belongs to the class-II pyridoxal-phosphate-dependent aminotransferase family. Histidinol-phosphate aminotransferase subfamily. As to quaternary structure, homodimer. The cofactor is pyridoxal 5'-phosphate.

It carries out the reaction L-histidinol phosphate + 2-oxoglutarate = 3-(imidazol-4-yl)-2-oxopropyl phosphate + L-glutamate. Its pathway is amino-acid biosynthesis; L-histidine biosynthesis; L-histidine from 5-phospho-alpha-D-ribose 1-diphosphate: step 7/9. This Bacillus licheniformis (strain ATCC 14580 / DSM 13 / JCM 2505 / CCUG 7422 / NBRC 12200 / NCIMB 9375 / NCTC 10341 / NRRL NRS-1264 / Gibson 46) protein is Histidinol-phosphate aminotransferase.